The following is a 447-amino-acid chain: Adenylosuccinate synthetase (447 aa).

GTP is bound by residues 12–18 (GDEGKGK) and 40–42 (GHT). Asp-13 functions as the Proton acceptor in the catalytic mechanism. Mg(2+)-binding residues include Asp-13 and Gly-40. IMP is bound by residues 13–16 (DEGK), 38–41 (NAGH), Thr-128, Arg-142, Gln-223, Thr-238, and Arg-302. The active-site Proton donor is the His-41. 298-304 (TTTGRKR) is a substrate binding site. Residues Arg-304, 330-332 (KLD), and 412-414 (SLG) contribute to the GTP site.

The protein belongs to the adenylosuccinate synthetase family. In terms of assembly, homodimer. Mg(2+) serves as cofactor.

It localises to the cytoplasm. It carries out the reaction IMP + L-aspartate + GTP = N(6)-(1,2-dicarboxyethyl)-AMP + GDP + phosphate + 2 H(+). The protein operates within purine metabolism; AMP biosynthesis via de novo pathway; AMP from IMP: step 1/2. Plays an important role in the de novo pathway of purine nucleotide biosynthesis. Catalyzes the first committed step in the biosynthesis of AMP from IMP. The protein is Adenylosuccinate synthetase of Trichormus variabilis (strain ATCC 29413 / PCC 7937) (Anabaena variabilis).